Reading from the N-terminus, the 640-residue chain is Chaperone protein HtpG (640 aa).

The interval 1–343 (MQTAENVEHL…SNDLPLNVSR (343 aa)) is a; substrate-binding. Positions 344–564 (EILQESKDID…THDMSGNLGR (221 aa)) are b. The segment at 565–640 (LLKSAGQKVP…LLLQNILSGK (76 aa)) is c.

It belongs to the heat shock protein 90 family. In terms of assembly, homodimer.

The protein resides in the cytoplasm. Functionally, molecular chaperone. Has ATPase activity. This is Chaperone protein HtpG from Nitrosomonas eutropha (strain DSM 101675 / C91 / Nm57).